We begin with the raw amino-acid sequence, 316 residues long: Type II restriction enzyme BsuBI (316 aa).

It belongs to the BsuBI/PstI type II restriction endonuclease family. Homodimer. Mg(2+) serves as cofactor.

It catalyses the reaction Endonucleolytic cleavage of DNA to give specific double-stranded fragments with terminal 5'-phosphates.. In terms of biological role, a P subtype restriction enzyme that recognizes the double-stranded sequence 5'-CTGCAG-3' and cleaves after A-5. The chain is Type II restriction enzyme BsuBI (hsdBR) from Bacillus subtilis.